A 449-amino-acid polypeptide reads, in one-letter code: Mycosin-1 (449 aa).

The signal sequence occupies residues 1 to 23 (MQRVAVMVLAVLLALFSAPPAWA). A disulfide bridge links Cys51 with Cys120. A Peptidase S8 domain is found at 66–389 (PWANDYLRIQ…AGVIDPVAAL (324 aa)). Active-site charge relay system residues include Asp92 and His123. 2 disordered regions span residues 160-179 (FQPK…QTAG) and 240-259 (TGQD…SDPR). Polar residues predominate over residues 170-179 (NDPNTTQTAG). Cys206 and Cys244 form a disulfide bridge. Ser334 (charge relay system) is an active-site residue. A helical transmembrane segment spans residues 421–441 (ITAVVIAGATLAFALGIGALA).

The protein belongs to the peptidase S8 family.

The protein localises to the cell membrane. Functionally, may play a dual role in regulation of ESX-1 secretion and virulence. Acts as a protease that cleaves EspB. This Mycolicibacterium smegmatis (strain ATCC 700084 / mc(2)155) (Mycobacterium smegmatis) protein is Mycosin-1.